The primary structure comprises 491 residues: Glutamate--tRNA ligase (491 aa).

The short motif at 9-19 (PSPTGTPHVGM) is the 'HIGH' region element. Residues 253-257 (KLSKR) carry the 'KMSKS' region motif. ATP is bound at residue Lys-256.

This sequence belongs to the class-I aminoacyl-tRNA synthetase family. Glutamate--tRNA ligase type 1 subfamily. As to quaternary structure, monomer.

Its subcellular location is the cytoplasm. It carries out the reaction tRNA(Glu) + L-glutamate + ATP = L-glutamyl-tRNA(Glu) + AMP + diphosphate. Catalyzes the attachment of glutamate to tRNA(Glu) in a two-step reaction: glutamate is first activated by ATP to form Glu-AMP and then transferred to the acceptor end of tRNA(Glu). In Leifsonia xyli subsp. xyli (strain CTCB07), this protein is Glutamate--tRNA ligase.